The chain runs to 381 residues: Neutral protease 2 homolog mep20 (381 aa).

The first 19 residues, 1–19 (MRFTALASAILPLACNVLA), serve as a signal peptide directing secretion. Residues 20 to 193 (LPAKTGEAPK…ASAVKPLDKR (174 aa)) constitute a propeptide that is removed on maturation. 2 disulfides stabilise this stretch: Cys-199/Cys-271 and Cys-278/Cys-296. Residue His-321 coordinates Zn(2+). Residue Glu-322 is part of the active site. Zn(2+)-binding residues include His-325 and Asp-336.

This sequence belongs to the peptidase M35 family. Zn(2+) is required as a cofactor.

It carries out the reaction Preferential cleavage of bonds with hydrophobic residues in P1'. Also 3-Asn-|-Gln-4 and 8-Gly-|-Ser-9 bonds in insulin B chain.. Functionally, secreted metalloproteinase that allows assimilation of proteinaceous substrates. Shows high activities on basic nuclear substrates such as histone and protamine. This chain is Neutral protease 2 homolog mep20 (mep20), found in Aspergillus flavus.